The sequence spans 351 residues: Phosphate acyltransferase (351 aa).

Belongs to the PlsX family. As to quaternary structure, homodimer. Probably interacts with PlsY.

The protein localises to the cytoplasm. It carries out the reaction a fatty acyl-[ACP] + phosphate = an acyl phosphate + holo-[ACP]. It functions in the pathway lipid metabolism; phospholipid metabolism. Catalyzes the reversible formation of acyl-phosphate (acyl-PO(4)) from acyl-[acyl-carrier-protein] (acyl-ACP). This enzyme utilizes acyl-ACP as fatty acyl donor, but not acyl-CoA. This chain is Phosphate acyltransferase, found in Verminephrobacter eiseniae (strain EF01-2).